Here is a 493-residue protein sequence, read N- to C-terminus: MSAEEMVQIRLEDRCYPVSKSKLIEQSDYFRALYRSGMREAVRPEVGPEVQQLRGLSAPGLRLVLDFINAGGAREGWGLSEDELAEASVLSEMVEAASFLQVTALLRLLLSHVRLGNCLELYRLAQVYGLPDLQDACLRFMVLRFHQVLCQPQFPLLLSPPQAPGDCSLKQRLREARMRGTPVLVALGDFLGGPLAPHPYQGEPPSMLRYEETTERWFPLANNLPPDLVNVRGYGSAILDNYLFIVGGYRITSQEISAAHSYNPITNEWLQVASMNQKRSNFKLVAVNSKLYAIGGQAVSNVECYNPEQDAWNFVAPLPNPLAEFSACECKGKIYVIGGYTTRDRNMNILQYCPSADLWTLFETCDVHIRKQQMVSVEETIYIVGGCLHELGPNRRSSQSEDMLTVQSYNTVTRQWLYLKENTSKSGLNLTCALHNDGIYIMSRDVTLSTSLEHRVFLKYNIFADSWEAFRRFPAFGHNLLISSLYLPNKAET.

Residues 5-77 (EMVQIRLEDR…INAGGAREGW (73 aa)) form the BTB domain. Kelch repeat units follow at residues 183–241 (VLVA…ILDN), 242–289 (YLFI…AVNS), 291–332 (LYAI…ECKG), 334–379 (IYVI…SVEE), 381–436 (IYIV…ALHN), and 438–487 (GIYI…SLYL).

As to quaternary structure, component of the BCR(KLHL42) E3 ubiquitin ligase complex, at least composed of CUL3 and KLHL42. Interacts (via the BTB domain) with CUL3. Interacts (via the kelch domains) with KATNA1.

The protein resides in the cytoplasm. It localises to the cytoskeleton. The protein localises to the spindle. Its pathway is protein modification; protein ubiquitination. Functionally, substrate-specific adapter of a BCR (BTB-CUL3-RBX1) E3 ubiquitin-protein ligase complex required for mitotic progression and cytokinesis. The BCR(KLHL42) E3 ubiquitin ligase complex mediates the ubiquitination and subsequent degradation of KATNA1. Involved in microtubule dynamics throughout mitosis. In Mus musculus (Mouse), this protein is Kelch-like protein 42 (Klhl42).